Here is a 71-residue protein sequence, read N- to C-terminus: uncharacterized protein (71 aa).

The chain crosses the membrane as a helical span at residues 12–34; it reads YLYNYFSSTTSWLVFIILSLDTI.

The protein localises to the membrane. This is an uncharacterized protein from Schizosaccharomyces pombe (strain 972 / ATCC 24843) (Fission yeast).